Here is an 899-residue protein sequence, read N- to C-terminus: Protein suppressor of hairy wing (899 aa).

Disordered stretches follow at residues 1-33, 45-127, and 171-206; these read MSAQ…RTGT, AAVA…KKMD, and AKEN…AKRR. Residues 21–31 show a composition bias toward basic and acidic residues; it reads SDGDKPKEKRT. The segment covering 45–55 has biased composition (low complexity); it reads AAVASKGASVS. 2 stretches are compositionally biased toward polar residues: residues 67 to 83 and 102 to 111; these read KILN…STKG and RSSAPASSAV. Residues 183–198 show a composition bias toward acidic residues; the sequence is VDEDDDDDDDDEDEGV. Residues 218–240 form a C2H2-type 1; atypical zinc finger; sequence HVCGKCYKTFRRVKSLKKHLEFC. The C2H2-type 2 zinc-finger motif lies at 288–311; the sequence is INCPDCPKSFKTQTSYERHIFITH. A C2H2-type 3; atypical zinc finger spans residues 318-340; that stretch reads YPCSICNAKLRSGALLKLHEQQH. C2H2-type zinc fingers lie at residues 347–365, 379–401, 412–434, 440–462, 468–490, 496–518, 522–544, 552–576, and 594–617; these read FACK…LKCH, MSCK…LKQH, YMCH…IRTH, FDCD…RRYH, YTCT…MKRH, HKCN…SKTH, YACS…VKDH, FACT…AGDH, and TDCA…RSVH. Disordered stretches follow at residues 646–665, 702–734, and 865–899; these read EQKE…GSLI, PLEG…VVKK, and GDED…ESEA. The span at 874–899 shows a compositional bias: basic and acidic residues; it reads ETDKGKDREADNTDTDTREDAVESEA.

The protein localises to the nucleus. Its function is as follows. Component of the gypsy chromatin insulator complex which is required for the function of the gypsy chromatin insulator and other endogenous chromatin insulators. Chromatin insulators are regulatory elements which establish independent domains of transcriptional activity within eukaryotic genomes. Insulators have two defining properties; they can block the communication between an enhancer and a promoter when placed between them and can also buffer transgenes from position effect variegation (PEV). Insulators are proposed to structure the chromatin fiber into independent domains of differing transcriptional potential by promoting the formation of distinct chromatin loops. This chromatin looping may involve the formation of insulator bodies, where homotypic interactions between individual subunits of the insulator complex could promote the clustering of widely spaced insulators at the nuclear periphery. Within the gypsy insulator complex, this protein binds specifically to a region of the gypsy element located 3' of the 5' long terminal repeat (LTR), and may also mediate interaction with other endogenous insulators at sites distinct from those recognized by Cp190. Cooperates with pita and cliff to recruit Cp190 and regulate insulator function at the front-ultraabdominal (Fub) boundary. The polypeptide is Protein suppressor of hairy wing (su(Hw)) (Drosophila virilis (Fruit fly)).